The sequence spans 734 residues: Methionine--tRNA ligase (734 aa).

The 'HIGH' region signature appears at 12–22; the sequence is PYVNNIPHLGN. Zn(2+) contacts are provided by C143, C146, C155, and C158. The short motif at 330–334 is the 'KMSKS' region element; sequence KFSKS. K333 is an ATP binding site. A tRNA-binding domain is found at 570–675; it reads FREKVLLRVV…QNPIAGERII (106 aa).

Belongs to the class-I aminoacyl-tRNA synthetase family. MetG type 1 subfamily. In terms of assembly, homodimer. The cofactor is Zn(2+).

The protein resides in the cytoplasm. The enzyme catalyses tRNA(Met) + L-methionine + ATP = L-methionyl-tRNA(Met) + AMP + diphosphate. Its function is as follows. Is required not only for elongation of protein synthesis but also for the initiation of all mRNA translation through initiator tRNA(fMet) aminoacylation. This chain is Methionine--tRNA ligase, found in Borreliella burgdorferi (strain ZS7) (Borrelia burgdorferi).